Reading from the N-terminus, the 122-residue chain is Large ribosomal subunit protein uL14 (122 aa).

The protein belongs to the universal ribosomal protein uL14 family. Part of the 50S ribosomal subunit. Forms a cluster with proteins L3 and L19. In the 70S ribosome, L14 and L19 interact and together make contacts with the 16S rRNA in bridges B5 and B8.

Binds to 23S rRNA. Forms part of two intersubunit bridges in the 70S ribosome. The polypeptide is Large ribosomal subunit protein uL14 (Mycobacterium tuberculosis (strain ATCC 25177 / H37Ra)).